The sequence spans 72 residues: Translation initiation factor IF-1 (72 aa).

An S1-like domain is found at 1-72; sequence MSKQDVIELE…SRGRITWRKK (72 aa).

This sequence belongs to the IF-1 family. Component of the 30S ribosomal translation pre-initiation complex which assembles on the 30S ribosome in the order IF-2 and IF-3, IF-1 and N-formylmethionyl-tRNA(fMet); mRNA recruitment can occur at any time during PIC assembly.

It localises to the cytoplasm. One of the essential components for the initiation of protein synthesis. Stabilizes the binding of IF-2 and IF-3 on the 30S subunit to which N-formylmethionyl-tRNA(fMet) subsequently binds. Helps modulate mRNA selection, yielding the 30S pre-initiation complex (PIC). Upon addition of the 50S ribosomal subunit IF-1, IF-2 and IF-3 are released leaving the mature 70S translation initiation complex. The sequence is that of Translation initiation factor IF-1 from Alkaliphilus oremlandii (strain OhILAs) (Clostridium oremlandii (strain OhILAs)).